We begin with the raw amino-acid sequence, 426 residues long: Glutamyl-tRNA reductase (426 aa).

Substrate contacts are provided by residues 49–52 (TCNR), Ser-101, 106–108 (EPQ), and Gln-112. The active-site Nucleophile is the Cys-50. 181–186 (GAGETI) serves as a coordination point for NADP(+). A disordered region spans residues 404–426 (DRLFPEKPGLPTSPHSYPDREDR).

This sequence belongs to the glutamyl-tRNA reductase family. Homodimer.

It catalyses the reaction (S)-4-amino-5-oxopentanoate + tRNA(Glu) + NADP(+) = L-glutamyl-tRNA(Glu) + NADPH + H(+). It functions in the pathway porphyrin-containing compound metabolism; protoporphyrin-IX biosynthesis; 5-aminolevulinate from L-glutamyl-tRNA(Glu): step 1/2. Catalyzes the NADPH-dependent reduction of glutamyl-tRNA(Glu) to glutamate 1-semialdehyde (GSA). This Xanthomonas campestris pv. phaseoli protein is Glutamyl-tRNA reductase.